A 181-amino-acid polypeptide reads, in one-letter code: Peptide deformylase (181 aa).

C99 and H141 together coordinate Fe cation. E142 is an active-site residue. H145 is a Fe cation binding site.

This sequence belongs to the polypeptide deformylase family. Requires Fe(2+) as cofactor.

The enzyme catalyses N-terminal N-formyl-L-methionyl-[peptide] + H2O = N-terminal L-methionyl-[peptide] + formate. Its function is as follows. Removes the formyl group from the N-terminal Met of newly synthesized proteins. Requires at least a dipeptide for an efficient rate of reaction. N-terminal L-methionine is a prerequisite for activity but the enzyme has broad specificity at other positions. The sequence is that of Peptide deformylase from Chlamydia muridarum (strain MoPn / Nigg).